A 387-amino-acid polypeptide reads, in one-letter code: Odorant receptor 19a (387 aa).

Topologically, residues 1-40 (MDISKVDSTRALVNHWRIFRIMGIHPPGKRTFWGRHYTAY) are cytoplasmic. The chain crosses the membrane as a helical span at residues 41–61 (SMVWNVTFHICIWVSFSVNLL). Over 62-71 (QSNSLETFCE) the chain is Extracellular. A helical membrane pass occupies residues 72–92 (SLCVTMPHTLYMLKLINVRRM). Residues 93 to 127 (RGQMISSHWLLRLLDKRLGCDDERQIIMAGIERAE) lie on the Cytoplasmic side of the membrane. The chain crosses the membrane as a helical span at residues 128-148 (FIFRTIFRGLACTVVLGIIYI). The Extracellular portion of the chain corresponds to 149–171 (SASSEPTLMYPTWIPWNWRDSTS). The chain crosses the membrane as a helical span at residues 172-192 (AYLATAMLHTTALMANATLVL). The Cytoplasmic segment spans residues 193-254 (NLSSYPGTYL…LRLFKSLERS (62 aa)). Residues 255-275 (LSMTCFLQFFSTACAQCTICY) traverse the membrane as a helical segment. The Extracellular portion of the chain corresponds to 276–285 (FLLFGNVGIM). A helical membrane pass occupies residues 286–306 (RFMNMLFLLVILTTETLLLCY). The Cytoplasmic portion of the chain corresponds to 307-336 (TAELPCKEGESLLTAVYSCNWLSQSVNFRR). The chain crosses the membrane as a helical span at residues 337–357 (LLLLMLARCQIPMILVSGVIV). Residues 358–387 (PISMKTFTVMIKGAYTMLTLLNEIRKTSLE) are Extracellular-facing.

The protein belongs to the insect chemoreceptor superfamily. Heteromeric odorant receptor channel (TC 1.A.69) family. Or2a subfamily. As to quaternary structure, interacts with Orco. Complexes exist early in the endomembrane system in olfactory sensory neurons (OSNs), coupling these complexes to the conserved ciliary trafficking pathway. As to expression, expressed in ai2A olfactory sensory neurons in the antenna.

Its subcellular location is the cell membrane. Its function is as follows. Odorant receptor which mediates acceptance or avoidance behavior, depending on its substrates. The odorant receptor repertoire encodes a large collection of odor stimuli that vary widely in identity, intensity, and duration. May form a complex with Orco to form odorant-sensing units, providing sensitive and prolonged odorant signaling and calcium permeability. Involved in the preference for citrus fruits for oviposition, especially through the response to valencene, the primary ligand of Or19a. Larvae growing on citrus fruits suffer a reduced risk of parasitism since endoparasitoid wasps that parasitize larvae are strongly repelled by the smell of citrus, as well as by valencene. The protein is Odorant receptor 19a (Or19a) of Drosophila melanogaster (Fruit fly).